Reading from the N-terminus, the 274-residue chain is Penicillin-insensitive murein endopeptidase (274 aa).

Positions 1–19 are cleaved as a signal peptide; sequence MNKTAIALLALLASSASLA. 3 cysteine pairs are disulfide-bonded: cysteine 44–cysteine 265, cysteine 187–cysteine 235, and cysteine 216–cysteine 223. The Zn(2+) site is built by histidine 110, histidine 113, aspartate 120, aspartate 147, histidine 150, and histidine 211.

The protein belongs to the peptidase M74 family. In terms of assembly, dimer. The cofactor is Zn(2+).

Its subcellular location is the periplasm. Murein endopeptidase that cleaves the D-alanyl-meso-2,6-diamino-pimelyl amide bond that connects peptidoglycan strands. Likely plays a role in the removal of murein from the sacculus. This is Penicillin-insensitive murein endopeptidase from Shigella sonnei (strain Ss046).